The chain runs to 380 residues: Flap endonuclease 1 (380 aa).

The segment at 1-104 (MGIQGLAKLI…GELAKRSERR (104 aa)) is N-domain. Arg19 is modified (symmetric dimethylarginine; by PRMT5). Asp34 contributes to the Mg(2+) binding site. Positions 47 and 70 each coordinate DNA. Lys80 is modified (N6-acetyllysine). Mg(2+) is bound at residue Asp86. A symmetric dimethylarginine; by PRMT5 mark is found at Arg100 and Arg104. Residues 122–253 (EVEKFTKRLV…KRAVDLIQKH (132 aa)) form an I-domain region. Glu158, Glu160, Asp179, and Asp181 together coordinate Mg(2+). Position 158 (Glu158) interacts with DNA. Ser187 is modified (phosphoserine; by CDK2). Arg192 carries the symmetric dimethylarginine; by PRMT5 modification. Ser197 bears the Phosphoserine mark. Gly231 and Asp233 together coordinate DNA. Asp233 contacts Mg(2+). Phosphoserine occurs at positions 255, 293, and 335. A disordered region spans residues 327–380 (RLSKSRQGSTQGRLDDFFKVTGSLSSAKRKEPEPKGSTKKKAKTGAAGKFKRGK). At Thr336 the chain carries Phosphothreonine. The interaction with PCNA stretch occupies residues 336–344 (TQGRLDDFF). N6-acetyllysine is present on Lys354. The segment covering 363–380 (STKKKAKTGAAGKFKRGK) has biased composition (basic residues). At Thr364 the chain carries Phosphothreonine. N6-acetyllysine is present on residues Lys375, Lys377, and Lys380.

This sequence belongs to the XPG/RAD2 endonuclease family. FEN1 subfamily. Interacts with PCNA. Three molecules of FEN1 bind to one PCNA trimer with each molecule binding to one PCNA monomer. PCNA stimulates the nuclease activity without altering cleavage specificity. The C-terminal domain binds EP300; can bind simultaneously to both PCNA and EP300. Interacts with DDX11; this interaction is direct and increases flap endonuclease activity of FEN1. Interacts with WDR4; regulating its endonuclease activity. Interacts with POLB. It depends on Mg(2+) as a cofactor. Post-translationally, acetylated by EP300. Acetylation inhibits both endonuclease and exonuclease activity. Acetylation also reduces DNA-binding activity but does not affect interaction with PCNA or EP300. In terms of processing, phosphorylation upon DNA damage induces relocalization to the nuclear plasma. Phosphorylation at Ser-187 by CDK2 occurs during late S-phase and results in dissociation from PCNA. Methylation at Arg-192 by PRMT5 impedes Ser-187 phosphorylation and increases interaction with PCNA.

The protein resides in the nucleus. It localises to the nucleolus. The protein localises to the nucleoplasm. It is found in the mitochondrion. Its function is as follows. Structure-specific nuclease with 5'-flap endonuclease and 5'-3' exonuclease activities involved in DNA replication and repair. During DNA replication, cleaves the 5'-overhanging flap structure that is generated by displacement synthesis when DNA polymerase encounters the 5'-end of a downstream Okazaki fragment. It enters the flap from the 5'-end and then tracks to cleave the flap base, leaving a nick for ligation. Also involved in the long patch base excision repair (LP-BER) pathway, by cleaving within the apurinic/apyrimidinic (AP) site-terminated flap. Acts as a genome stabilization factor that prevents flaps from equilibrating into structures that lead to duplications and deletions. Also possesses 5'-3' exonuclease activity on nicked or gapped double-stranded DNA, and exhibits RNase H activity. Also involved in replication and repair of rDNA and in repairing mitochondrial DNA. This is Flap endonuclease 1 from Homo sapiens (Human).